The primary structure comprises 157 residues: Ribonuclease H (157 aa).

Positions 2–145 (NAEISKIYTD…CDAIARAFAA (144 aa)) constitute an RNase H type-1 domain. Residues aspartate 11, glutamate 50, aspartate 74, and aspartate 137 each contribute to the Mg(2+) site.

The protein belongs to the RNase H family. Monomer. Mg(2+) serves as cofactor.

The protein localises to the cytoplasm. The catalysed reaction is Endonucleolytic cleavage to 5'-phosphomonoester.. Functionally, endonuclease that specifically degrades the RNA of RNA-DNA hybrids. The chain is Ribonuclease H from Cyanothece sp. (strain PCC 7425 / ATCC 29141).